A 365-amino-acid polypeptide reads, in one-letter code: MSTSLWLNNLEEWMNEDYIRAIFENVRKVNYYEDGESGAILKTCCIEFESQDAARNALERQSTQRLISGNPISLDVVPEWQKPSYYMLFISNIDPEVSENDIKYLFQRYNFISARVLRCVDGTSTSIAFIWLANESDIQNAQVEMQGAFCLKRSILVHSVKSDKNTYLSSPGFYGTPQPLNQFTDPNNTAVYVHQLPENITTQELRSYFLHFGEILYTQVNNNSGRIVFAQRYFAEQAINEMNNFPLHGVRIQLSWARPPSMALLPSKQSTYWPALAAPVYPSMKDVPNNPFTPFSPINPYYAKSWNHTASAPLLPPGLKNGSDYPYLSVPPDILNDSYLAMCEAVNSRLDAESTMLLPVHYSQA.

RRM domains are found at residues 3–79 (TSLW…VVPE), 86–162 (YMLF…SVKS), and 189–259 (TAVY…WARP).

Component of the U1 snRNP complex.

Its subcellular location is the nucleus. This Schizosaccharomyces pombe (strain 972 / ATCC 24843) (Fission yeast) protein is U1 snRNP-associated protein usp109 (usp109).